The chain runs to 311 residues: MTKLIFMGTPDFSATVLKGLLESDQYEVLAVVTQPDRAVGRKKEIRITPVKEVALSYGLPIYQPEKLSGSPEMEAIMNLGADGIVTVAFGQFLPSKLLARMNFVVNVHASLLPKHRGGAPIHYALIQGDKETGVTIMETVKEMDAGDMISRRSIPITDEDNVGTLFEKLAIVGRDLLLDTLPAYLSGDIQPEAQDPSQVTFSPNIRPEEERLDWNMTNRQLFNQIRGMNPWPVAHTLWQGERFKIYEAELADGEGQPGEILEIGKRQLLVATGEGALVLKTVQPAGKPKMTISDFLNGAGRNLAVGDKFGN.

Residue 110 to 113 participates in (6S)-5,6,7,8-tetrahydrofolate binding; the sequence is SLLP.

Belongs to the Fmt family.

The enzyme catalyses L-methionyl-tRNA(fMet) + (6R)-10-formyltetrahydrofolate = N-formyl-L-methionyl-tRNA(fMet) + (6S)-5,6,7,8-tetrahydrofolate + H(+). Its function is as follows. Attaches a formyl group to the free amino group of methionyl-tRNA(fMet). The formyl group appears to play a dual role in the initiator identity of N-formylmethionyl-tRNA by promoting its recognition by IF2 and preventing the misappropriation of this tRNA by the elongation apparatus. In Streptococcus gordonii (strain Challis / ATCC 35105 / BCRC 15272 / CH1 / DL1 / V288), this protein is Methionyl-tRNA formyltransferase.